We begin with the raw amino-acid sequence, 194 residues long: Protein GrpE 1 (194 aa).

The tract at residues 1-22 (MIHNEEEQLEKKIEKNQDPKIN) is disordered.

The protein belongs to the GrpE family. In terms of assembly, homodimer.

It localises to the cytoplasm. Its function is as follows. Participates actively in the response to hyperosmotic and heat shock by preventing the aggregation of stress-denatured proteins, in association with DnaK and GrpE. It is the nucleotide exchange factor for DnaK and may function as a thermosensor. Unfolded proteins bind initially to DnaJ; upon interaction with the DnaJ-bound protein, DnaK hydrolyzes its bound ATP, resulting in the formation of a stable complex. GrpE releases ADP from DnaK; ATP binding to DnaK triggers the release of the substrate protein, thus completing the reaction cycle. Several rounds of ATP-dependent interactions between DnaJ, DnaK and GrpE are required for fully efficient folding. In Buchnera aphidicola subsp. Acyrthosiphon pisum (strain APS) (Acyrthosiphon pisum symbiotic bacterium), this protein is Protein GrpE 1.